Here is a 667-residue protein sequence, read N- to C-terminus: Phosphomethylpyrimidine synthase (667 aa).

Substrate contacts are provided by residues asparagine 235, methionine 264, tyrosine 293, histidine 329, 349–351 (SRG), 390–393 (DGMR), and glutamate 429. Zn(2+) is bound at residue histidine 433. Tyrosine 456 is a binding site for substrate. Position 497 (histidine 497) interacts with Zn(2+). [4Fe-4S] cluster contacts are provided by cysteine 577, cysteine 580, and cysteine 585. The disordered stretch occupies residues 618–642 (DSYTGSESDTAKRASQREQGMAQMS).

It belongs to the ThiC family. Homodimer. [4Fe-4S] cluster is required as a cofactor.

The catalysed reaction is 5-amino-1-(5-phospho-beta-D-ribosyl)imidazole + S-adenosyl-L-methionine = 4-amino-2-methyl-5-(phosphooxymethyl)pyrimidine + CO + 5'-deoxyadenosine + formate + L-methionine + 3 H(+). It participates in cofactor biosynthesis; thiamine diphosphate biosynthesis. Functionally, catalyzes the synthesis of the hydroxymethylpyrimidine phosphate (HMP-P) moiety of thiamine from aminoimidazole ribotide (AIR) in a radical S-adenosyl-L-methionine (SAM)-dependent reaction. The sequence is that of Phosphomethylpyrimidine synthase from Shewanella pealeana (strain ATCC 700345 / ANG-SQ1).